A 431-amino-acid chain; its full sequence is Nocturnin (431 aa).

Residues 1 to 75 (MFHSPRRLCS…SMGTGTSRLY (75 aa)) constitute a mitochondrion transit peptide. Residues 20 to 31 (LRRLPAPGLRRP) are compositionally biased toward low complexity. The disordered stretch occupies residues 20–41 (LRRLPAPGLRRPLSPPAAVPRP). A compositionally biased stretch (pro residues) spans 32 to 41 (LSPPAAVPRP). Glutamate 195 contacts Mg(2+). Substrate-binding positions include glutamate 195, 219-221 (KPW), asparagine 263, 286-289 (HLKA), and 324-326 (DFN). The interaction with PPARG stretch occupies residues 343–353 (NLNSAYKLLSA). Histidine 414 is a binding site for substrate.

It belongs to the CCR4/nocturin family. As to quaternary structure, interacts with PPARG. It depends on Mg(2+) as a cofactor. Adipose tissue. Expression is higher in subcutaneous adipose tissue as compared to visceral adipose tissue.

The protein localises to the cytoplasm. Its subcellular location is the nucleus. It localises to the perinuclear region. It is found in the mitochondrion. The enzyme catalyses NADP(+) + H2O = phosphate + NAD(+). It carries out the reaction NADPH + H2O = phosphate + NADH. Functionally, phosphatase which catalyzes the conversion of NADP(+) to NAD(+) and of NADPH to NADH. Shows a small preference for NADPH over NADP(+). Represses translation and promotes degradation of target mRNA molecules. Plays an important role in post-transcriptional regulation of metabolic genes under circadian control. Exerts a rhythmic post-transcriptional control of genes necessary for metabolic functions including nutrient absorption, glucose/insulin sensitivity, lipid metabolism, adipogenesis, inflammation and osteogenesis. Plays an important role in favoring adipogenesis over osteoblastogenesis and acts as a key regulator of the adipogenesis/osteogenesis balance. Promotes adipogenesis by facilitating PPARG nuclear translocation which activates its transcriptional activity. Regulates circadian expression of NOS2 in the liver and negatively regulates the circadian expression of IGF1 in the bone. Critical for proper development of early embryos. This is Nocturnin from Homo sapiens (Human).